Reading from the N-terminus, the 295-residue chain is Protoheme IX farnesyltransferase 2 (295 aa).

Helical transmembrane passes span 9–29 (ITKP…FFLA), 36–56 (FALF…GCVF), 83–103 (LPLA…LLYV), 108–128 (LSAF…SLWL), 135–155 (GTLV…CAVS), 163–183 (VTLL…IAIF), 209–229 (IVLY…GGYA), 230–250 (GLGY…MAWG), and 264–284 (VFGF…VDSQ).

Belongs to the UbiA prenyltransferase family. Protoheme IX farnesyltransferase subfamily.

The protein resides in the cell inner membrane. The enzyme catalyses heme b + (2E,6E)-farnesyl diphosphate + H2O = Fe(II)-heme o + diphosphate. The protein operates within porphyrin-containing compound metabolism; heme O biosynthesis; heme O from protoheme: step 1/1. In terms of biological role, converts heme B (protoheme IX) to heme O by substitution of the vinyl group on carbon 2 of heme B porphyrin ring with a hydroxyethyl farnesyl side group. This chain is Protoheme IX farnesyltransferase 2, found in Pseudomonas putida (strain ATCC 47054 / DSM 6125 / CFBP 8728 / NCIMB 11950 / KT2440).